Consider the following 362-residue polypeptide: Aminomethyltransferase (362 aa).

This sequence belongs to the GcvT family. In terms of assembly, the glycine cleavage system is composed of four proteins: P, T, L and H.

It carries out the reaction N(6)-[(R)-S(8)-aminomethyldihydrolipoyl]-L-lysyl-[protein] + (6S)-5,6,7,8-tetrahydrofolate = N(6)-[(R)-dihydrolipoyl]-L-lysyl-[protein] + (6R)-5,10-methylene-5,6,7,8-tetrahydrofolate + NH4(+). The glycine cleavage system catalyzes the degradation of glycine. The polypeptide is Aminomethyltransferase (Listeria welshimeri serovar 6b (strain ATCC 35897 / DSM 20650 / CCUG 15529 / CIP 8149 / NCTC 11857 / SLCC 5334 / V8)).